The primary structure comprises 325 residues: D-xylose 1-dehydrogenase (NADP(+)) 2 (325 aa).

The signal sequence occupies residues 1 to 22; it reads MMFGILGTAGIGVKSVIPAVQA.

It belongs to the Gfo/Idh/MocA family. Homotetramer.

It localises to the secreted. The enzyme catalyses D-xylose + NADP(+) = D-xylono-1,5-lactone + NADPH + H(+). In terms of biological role, NADP-dependent D-xylose dehydrogenase involved in the degradation of D-xylose, a major component of hemicelluloses such as xylan. Even if it shows D-xylose dehydrogenase activity, it is not essential for D-xylose degradation. The protein is D-xylose 1-dehydrogenase (NADP(+)) 2 of Haloferax volcanii (strain ATCC 29605 / DSM 3757 / JCM 8879 / NBRC 14742 / NCIMB 2012 / VKM B-1768 / DS2) (Halobacterium volcanii).